The following is a 104-amino-acid chain: Large ribosomal subunit protein uL24 (104 aa).

It belongs to the universal ribosomal protein uL24 family. In terms of assembly, part of the 50S ribosomal subunit.

Functionally, one of two assembly initiator proteins, it binds directly to the 5'-end of the 23S rRNA, where it nucleates assembly of the 50S subunit. One of the proteins that surrounds the polypeptide exit tunnel on the outside of the subunit. This is Large ribosomal subunit protein uL24 from Rhodopseudomonas palustris (strain BisA53).